Reading from the N-terminus, the 146-residue chain is Hemoglobin subunit beta (146 aa).

An N-acetylvaline modification is found at Val-1. The 145-residue stretch at 2 to 146 folds into the Globin domain; sequence HLTGEEKSAV…VANALAHKYH (145 aa). Thr-12 carries the post-translational modification Phosphothreonine. At Ser-44 the chain carries Phosphoserine. N6-acetyllysine is present on Lys-59. His-63 provides a ligand contact to heme b. Lys-82 is modified (N6-acetyllysine). Heme b is bound at residue His-92. Cys-93 bears the S-nitrosocysteine mark. Lys-144 bears the N6-acetyllysine mark.

Belongs to the globin family. As to quaternary structure, heterotetramer of two alpha chains and two beta chains. As to expression, red blood cells.

In terms of biological role, involved in oxygen transport from the lung to the various peripheral tissues. The polypeptide is Hemoglobin subunit beta (HBB) (Saguinus mystax (Moustached tamarin)).